A 299-amino-acid polypeptide reads, in one-letter code: Acetylglutamate kinase (299 aa).

Substrate is bound by residues 66–67, arginine 88, and asparagine 196; that span reads GG.

This sequence belongs to the acetylglutamate kinase family. ArgB subfamily.

It localises to the cytoplasm. It carries out the reaction N-acetyl-L-glutamate + ATP = N-acetyl-L-glutamyl 5-phosphate + ADP. It participates in amino-acid biosynthesis; L-arginine biosynthesis; N(2)-acetyl-L-ornithine from L-glutamate: step 2/4. Its function is as follows. Catalyzes the ATP-dependent phosphorylation of N-acetyl-L-glutamate. The protein is Acetylglutamate kinase of Alcanivorax borkumensis (strain ATCC 700651 / DSM 11573 / NCIMB 13689 / SK2).